Here is a 499-residue protein sequence, read N- to C-terminus: Cytochrome P450 710A2 (499 aa).

A helical membrane pass occupies residues 5–25; that stretch reads VSIFASLAPYLVSALLLFFLI. Residue Cys439 coordinates heme.

Belongs to the cytochrome P450 family. It depends on heme as a cofactor. In terms of tissue distribution, expressed in the vascular tissues of roots, shoots, stems and leaves. Expressed in root tips, carpes, siliques and seeds.

Its subcellular location is the membrane. The enzyme catalyses 5-dehydroepisterol + NADPH + O2 + H(+) = ergosta-5,7,22,24(28)-tetraen-3beta-ol + NADP(+) + 2 H2O. It functions in the pathway steroid biosynthesis; sterol biosynthesis. Its function is as follows. Required to form the C-22 double bond in the sterol side chain. Possesses in vitro C-22 desaturase activity toward 24-epi-campesterol and beta-sitosterol and produces brassicasterol and stigmasterol, respectively. No activity with campesterol. This chain is Cytochrome P450 710A2, found in Arabidopsis thaliana (Mouse-ear cress).